The chain runs to 404 residues: tRNA pseudouridine(31) synthase (404 aa).

D168 is a catalytic residue.

Belongs to the pseudouridine synthase RluA family.

Its subcellular location is the cytoplasm. It is found in the mitochondrion. The catalysed reaction is uridine(31) in tRNA = pseudouridine(31) in tRNA. Catalyzes the formation of pseudouridine at position 31 in the psi GC loop of tRNAS. The chain is tRNA pseudouridine(31) synthase (PUS6) from Saccharomyces cerevisiae (strain ATCC 204508 / S288c) (Baker's yeast).